A 345-amino-acid polypeptide reads, in one-letter code: MPRIDADLKLDFKDVLLRPKRSSLKSRSEVDLERTFTFRNSKQTYSGIPIIVANMDTVGTFEMAVVMSQHAMFTAVHKHYSLDDWKCFAETHPECLQHVAVSSGSGQNDLERMSRILEAVPQVKFICLDVANGYSEHFVEFVKLVRSKFPEHTIMAGNVVTGEMVEELILSGADIIKVGVGPGSVCTTRTKTGVGYPQLSAVIECADSAHGLKGHIISDGGCTCPGDVAKAFGAGADFVMLGGMFSGHTECAGEVIERNGQKLKLFYGMSSDTAMKKHAGGVAEYRASEGKTVEVPYKGDVENTILDILGGLRSTCTYVGAAKLKELSRRATFIRVTQQHNTVFG.

Residue 26–27 (SR) coordinates NADP(+). At S28 the chain carries Phosphoserine. NADP(+)-binding positions include K78, 129-131 (DVA), and 180-181 (VG). K(+) is bound by residues G181, G183, and C186. C186 serves as the catalytic Thioimidate intermediate. Catalysis depends on T188, which acts as the Proton donor/acceptor. R189 lines the K(+) pocket. Residues 219–221 (DGG), 242–243 (GG), 268–270 (GMS), and 286–290 (RASEG) each bind GMP. Residues M269, 285–286 (YR), and 314–317 (STCT) contribute to the NADP(+) site.

The protein belongs to the IMPDH/GMPR family. GuaC type 1 subfamily. As to quaternary structure, homotetramer.

The catalysed reaction is IMP + NH4(+) + NADP(+) = GMP + NADPH + 2 H(+). In terms of biological role, catalyzes the irreversible NADPH-dependent deamination of GMP to IMP. It functions in the conversion of nucleobase, nucleoside and nucleotide derivatives of G to A nucleotides, and in maintaining the intracellular balance of A and G nucleotides. This Mus musculus (Mouse) protein is GMP reductase 1 (Gmpr).